The following is a 162-amino-acid chain: NADH-quinone oxidoreductase subunit I (162 aa).

4Fe-4S ferredoxin-type domains lie at 53-83 (LRRYPNGEERCIACKLCEAICPALAITIEAE) and 93-122 (TRYDIDLTKCIFCGFCEEACPVDAVVETRI). Residues Cys-63, Cys-66, Cys-69, Cys-73, Cys-102, Cys-105, Cys-108, and Cys-112 each coordinate [4Fe-4S] cluster.

This sequence belongs to the complex I 23 kDa subunit family. In terms of assembly, NDH-1 is composed of 14 different subunits. Subunits NuoA, H, J, K, L, M, N constitute the membrane sector of the complex. The cofactor is [4Fe-4S] cluster.

Its subcellular location is the cell inner membrane. It catalyses the reaction a quinone + NADH + 5 H(+)(in) = a quinol + NAD(+) + 4 H(+)(out). Its function is as follows. NDH-1 shuttles electrons from NADH, via FMN and iron-sulfur (Fe-S) centers, to quinones in the respiratory chain. The immediate electron acceptor for the enzyme in this species is believed to be ubiquinone. Couples the redox reaction to proton translocation (for every two electrons transferred, four hydrogen ions are translocated across the cytoplasmic membrane), and thus conserves the redox energy in a proton gradient. The polypeptide is NADH-quinone oxidoreductase subunit I (Dechloromonas aromatica (strain RCB)).